The sequence spans 164 residues: MPSNIYHTFEKKSYKIKNKLLGDHKIHNLWVLFKNKKPVAAIVETTAPDGYSGAINMLVAAYFNGEIINARVLSHKETPGIGDKIDLSISNWITRFTGMYVASIEDKDFKLRKYGGKIEQFTGATITPQSVTNSIKRTVVFIKKIPFIFDFLNKGIYEYQKFFK.

T125 carries the FMN phosphoryl threonine modification.

Belongs to the RnfG family. The complex is composed of six subunits: RnfA, RnfB, RnfC, RnfD, RnfE and RnfG. It depends on FMN as a cofactor.

Part of a membrane-bound complex that couples electron transfer with translocation of ions across the membrane. This chain is Ion-translocating oxidoreductase complex subunit G, found in Buchnera aphidicola subsp. Acyrthosiphon pisum (strain APS) (Acyrthosiphon pisum symbiotic bacterium).